Consider the following 157-residue polypeptide: Small ribosomal subunit protein uS7 (157 aa).

This sequence belongs to the universal ribosomal protein uS7 family. Part of the 30S ribosomal subunit. Contacts proteins S9 and S11.

In terms of biological role, one of the primary rRNA binding proteins, it binds directly to 16S rRNA where it nucleates assembly of the head domain of the 30S subunit. Is located at the subunit interface close to the decoding center, probably blocks exit of the E-site tRNA. The polypeptide is Small ribosomal subunit protein uS7 (Chlamydia felis (strain Fe/C-56) (Chlamydophila felis)).